We begin with the raw amino-acid sequence, 185 residues long: Large ribosomal subunit protein uL5 (185 aa).

It belongs to the universal ribosomal protein uL5 family. Part of the 50S ribosomal subunit; part of the 5S rRNA/L5/L18/L25 subcomplex. Contacts the 5S rRNA and the P site tRNA. Forms a bridge to the 30S subunit in the 70S ribosome.

In terms of biological role, this is one of the proteins that bind and probably mediate the attachment of the 5S RNA into the large ribosomal subunit, where it forms part of the central protuberance. In the 70S ribosome it contacts protein S13 of the 30S subunit (bridge B1b), connecting the 2 subunits; this bridge is implicated in subunit movement. Contacts the P site tRNA; the 5S rRNA and some of its associated proteins might help stabilize positioning of ribosome-bound tRNAs. The polypeptide is Large ribosomal subunit protein uL5 (Nitrobacter hamburgensis (strain DSM 10229 / NCIMB 13809 / X14)).